The sequence spans 648 residues: Biosynthetic arginine decarboxylase (648 aa).

Lysine 109 bears the N6-(pyridoxal phosphate)lysine mark. 291–301 provides a ligand contact to substrate; sequence IDVGGGLGIDF.

The protein belongs to the Orn/Lys/Arg decarboxylase class-II family. SpeA subfamily. It depends on Mg(2+) as a cofactor. Pyridoxal 5'-phosphate is required as a cofactor.

The catalysed reaction is L-arginine + H(+) = agmatine + CO2. Its function is as follows. Catalyzes the biosynthesis of agmatine from arginine. This chain is Biosynthetic arginine decarboxylase, found in Prochlorococcus marinus subsp. pastoris (strain CCMP1986 / NIES-2087 / MED4).